The chain runs to 436 residues: Eukaryotic peptide chain release factor subunit 1 (436 aa).

Belongs to the eukaryotic release factor 1 family. Heterodimer of two subunits, one of which binds GTP.

The protein localises to the cytoplasm. Functionally, directs the termination of nascent peptide synthesis (translation) in response to the termination codons UAA and UAG. In B.musculus UGA codes for tryptophan. The polypeptide is Eukaryotic peptide chain release factor subunit 1 (eRF1) (Blepharisma musculus).